Reading from the N-terminus, the 122-residue chain is UPF0231 protein VV1_1657 (122 aa).

It belongs to the UPF0231 family.

In Vibrio vulnificus (strain CMCP6), this protein is UPF0231 protein VV1_1657.